Consider the following 243-residue polypeptide: 7-cyano-7-deazaguanine synthase (243 aa).

18–28 contacts ATP; that stretch reads FSGGQDSATCL. Zn(2+) contacts are provided by Cys206, Cys221, Cys224, and Cys227.

The protein belongs to the QueC family. Zn(2+) serves as cofactor.

It carries out the reaction 7-carboxy-7-deazaguanine + NH4(+) + ATP = 7-cyano-7-deazaguanine + ADP + phosphate + H2O + H(+). Its pathway is purine metabolism; 7-cyano-7-deazaguanine biosynthesis. Catalyzes the ATP-dependent conversion of 7-carboxy-7-deazaguanine (CDG) to 7-cyano-7-deazaguanine (preQ(0)). The protein is 7-cyano-7-deazaguanine synthase of Maricaulis maris (strain MCS10) (Caulobacter maris).